Consider the following 116-residue polypeptide: S-adenosylmethionine decarboxylase proenzyme (116 aa).

The active-site Schiff-base intermediate with substrate; via pyruvic acid is the Ser-63. Ser-63 is modified (pyruvic acid (Ser); by autocatalysis). Catalysis depends on His-68, which acts as the Proton acceptor; for processing activity. Residue Cys-83 is the Proton donor; for catalytic activity of the active site.

The protein belongs to the prokaryotic AdoMetDC family. Type 1 subfamily. In terms of assembly, heterotetramer of two alpha and two beta chains arranged as a dimer of alpha/beta heterodimers. It depends on pyruvate as a cofactor. In terms of processing, is synthesized initially as an inactive proenzyme. Formation of the active enzyme involves a self-maturation process in which the active site pyruvoyl group is generated from an internal serine residue via an autocatalytic post-translational modification. Two non-identical subunits are generated from the proenzyme in this reaction, and the pyruvate is formed at the N-terminus of the alpha chain, which is derived from the carboxyl end of the proenzyme. The post-translation cleavage follows an unusual pathway, termed non-hydrolytic serinolysis, in which the side chain hydroxyl group of the serine supplies its oxygen atom to form the C-terminus of the beta chain, while the remainder of the serine residue undergoes an oxidative deamination to produce ammonia and the pyruvoyl group blocking the N-terminus of the alpha chain.

The catalysed reaction is S-adenosyl-L-methionine + H(+) = S-adenosyl 3-(methylsulfanyl)propylamine + CO2. It functions in the pathway amine and polyamine biosynthesis; S-adenosylmethioninamine biosynthesis; S-adenosylmethioninamine from S-adenosyl-L-methionine: step 1/1. Catalyzes the decarboxylation of S-adenosylmethionine to S-adenosylmethioninamine (dcAdoMet), the propylamine donor required for the synthesis of the polyamines spermine and spermidine from the diamine putrescine. The chain is S-adenosylmethionine decarboxylase proenzyme from Clostridium botulinum (strain Okra / Type B1).